Here is a 287-residue protein sequence, read N- to C-terminus: 23S rRNA (uridine(2479)-2'-O)-methyltransferase (287 aa).

S-adenosyl-L-methionine-binding positions include 210–211 (TD), glycine 232, and 252–254 (IPM).

It belongs to the class IV-like SAM-binding methyltransferase superfamily. RNA methyltransferase TsnR/AvirB family. In terms of assembly, homodimer.

The catalysed reaction is uridine(2479) in 23S rRNA + S-adenosyl-L-methionine = 2'-O-methyluridine(2479) in 23S rRNA + S-adenosyl-L-homocysteine + H(+). Specifically methylates the 2'-O-ribose position of uridine-2479 in 23S ribosomal RNA. Confers resistance to antibiotic avilamycin, an orthosomycin antibiotic. This is 23S rRNA (uridine(2479)-2'-O)-methyltransferase (aviRb) from Streptomyces viridochromogenes.